The primary structure comprises 140 residues: uncharacterized protein (140 aa).

This is an uncharacterized protein from Neurospora crassa (strain ATCC 24698 / 74-OR23-1A / CBS 708.71 / DSM 1257 / FGSC 987).